Here is a 338-residue protein sequence, read N- to C-terminus: Nucleoid-associated protein VSAL_I1059 (338 aa).

Residues 319-338 (KGTPPNLKDQLTRRLGSSES) are disordered.

This sequence belongs to the YejK family.

It localises to the cytoplasm. The protein resides in the nucleoid. The polypeptide is Nucleoid-associated protein VSAL_I1059 (Aliivibrio salmonicida (strain LFI1238) (Vibrio salmonicida (strain LFI1238))).